A 578-amino-acid polypeptide reads, in one-letter code: Arginine--tRNA ligase (578 aa).

The 'HIGH' region signature appears at 127 to 137 (PNLAKEMHVGH).

The protein belongs to the class-I aminoacyl-tRNA synthetase family. In terms of assembly, monomer.

It localises to the cytoplasm. It catalyses the reaction tRNA(Arg) + L-arginine + ATP = L-arginyl-tRNA(Arg) + AMP + diphosphate. The sequence is that of Arginine--tRNA ligase from Pseudomonas savastanoi pv. phaseolicola (strain 1448A / Race 6) (Pseudomonas syringae pv. phaseolicola (strain 1448A / Race 6)).